The chain runs to 240 residues: UDP-2,3-diacylglucosamine hydrolase (240 aa).

Mn(2+) is bound by residues aspartate 8, histidine 10, aspartate 41, asparagine 79, and histidine 114. Residue 79 to 80 coordinates substrate; that stretch reads NR. Residues aspartate 122, serine 160, asparagine 164, lysine 167, and histidine 195 each contribute to the substrate site. Residues histidine 195 and histidine 197 each contribute to the Mn(2+) site.

Belongs to the LpxH family. It depends on Mn(2+) as a cofactor.

It localises to the cell inner membrane. The catalysed reaction is UDP-2-N,3-O-bis[(3R)-3-hydroxytetradecanoyl]-alpha-D-glucosamine + H2O = 2-N,3-O-bis[(3R)-3-hydroxytetradecanoyl]-alpha-D-glucosaminyl 1-phosphate + UMP + 2 H(+). It participates in glycolipid biosynthesis; lipid IV(A) biosynthesis; lipid IV(A) from (3R)-3-hydroxytetradecanoyl-[acyl-carrier-protein] and UDP-N-acetyl-alpha-D-glucosamine: step 4/6. Hydrolyzes the pyrophosphate bond of UDP-2,3-diacylglucosamine to yield 2,3-diacylglucosamine 1-phosphate (lipid X) and UMP by catalyzing the attack of water at the alpha-P atom. Involved in the biosynthesis of lipid A, a phosphorylated glycolipid that anchors the lipopolysaccharide to the outer membrane of the cell. The sequence is that of UDP-2,3-diacylglucosamine hydrolase from Escherichia coli O6:K15:H31 (strain 536 / UPEC).